The following is a 98-amino-acid chain: NADH-ubiquinone oxidoreductase chain 4L (98 aa).

The next 3 helical transmembrane spans lie at 1–21 (MSLV…GLLM), 29–49 (SLLC…LIIL), and 61–81 (IILL…LVMV).

The protein belongs to the complex I subunit 4L family. As to quaternary structure, core subunit of respiratory chain NADH dehydrogenase (Complex I) which is composed of 45 different subunits.

The protein resides in the mitochondrion inner membrane. The catalysed reaction is a ubiquinone + NADH + 5 H(+)(in) = a ubiquinol + NAD(+) + 4 H(+)(out). Functionally, core subunit of the mitochondrial membrane respiratory chain NADH dehydrogenase (Complex I) which catalyzes electron transfer from NADH through the respiratory chain, using ubiquinone as an electron acceptor. Part of the enzyme membrane arm which is embedded in the lipid bilayer and involved in proton translocation. This Hippopotamus amphibius (Hippopotamus) protein is NADH-ubiquinone oxidoreductase chain 4L (MT-ND4L).